The primary structure comprises 592 residues: Beta-fructofuranosidase, insoluble isoenzyme 1 (592 aa).

An N-terminal signal peptide occupies residues 1–39 (MGVTIRNRNYDHGSLPFLQSLLAILLVTTTTLHINGVEA). A propeptide spanning residues 40-48 (FHEIHYNLQ) is cleaved from the precursor. D74 is an active-site residue. Residue N170 is glycosylated (N-linked (GlcNAc...) (complex) asparagine). N195 carries an N-linked (GlcNAc...) asparagine glycan. The N-linked (GlcNAc...) (complex) asparagine glycan is linked to N311. An N-linked (GlcNAc...) (high mannose) asparagine glycan is attached at N348. The N-linked (GlcNAc...) asparagine glycan is linked to N570.

Belongs to the glycosyl hydrolase 32 family. As to expression, in leaves and roots of young plants.

Its subcellular location is the secreted. The protein resides in the cell wall. The catalysed reaction is Hydrolysis of terminal non-reducing beta-D-fructofuranoside residues in beta-D-fructofuranosides.. May play an important role in phloem unloading and in stress response. The protein is Beta-fructofuranosidase, insoluble isoenzyme 1 (INV1) of Daucus carota (Wild carrot).